The sequence spans 122 residues: Small ribosomal subunit protein uS13 (122 aa).

The disordered stretch occupies residues 92-122 (HRMGLPVRGQRTKTNARTRKGPSKPVSGKKK). The segment covering 101-122 (QRTKTNARTRKGPSKPVSGKKK) has biased composition (basic residues).

The protein belongs to the universal ribosomal protein uS13 family. In terms of assembly, part of the 30S ribosomal subunit. Forms a loose heterodimer with protein S19. Forms two bridges to the 50S subunit in the 70S ribosome.

Located at the top of the head of the 30S subunit, it contacts several helices of the 16S rRNA. In the 70S ribosome it contacts the 23S rRNA (bridge B1a) and protein L5 of the 50S subunit (bridge B1b), connecting the 2 subunits; these bridges are implicated in subunit movement. Contacts the tRNAs in the A and P-sites. The polypeptide is Small ribosomal subunit protein uS13 (Ruminiclostridium cellulolyticum (strain ATCC 35319 / DSM 5812 / JCM 6584 / H10) (Clostridium cellulolyticum)).